A 98-amino-acid chain; its full sequence is Small ribosomal subunit protein uS17 (98 aa).

The segment at 1–21 (MADQKGPKYTPAAEKPRGRRK) is disordered. Residue Lys96 forms an Isoglutamyl lysine isopeptide (Lys-Gln) (interchain with Q-Cter in protein Pup) linkage.

Belongs to the universal ribosomal protein uS17 family. In terms of assembly, part of the 30S ribosomal subunit.

In terms of biological role, one of the primary rRNA binding proteins, it binds specifically to the 5'-end of 16S ribosomal RNA. In Mycolicibacterium smegmatis (strain ATCC 700084 / mc(2)155) (Mycobacterium smegmatis), this protein is Small ribosomal subunit protein uS17 (rpsQ).